A 323-amino-acid polypeptide reads, in one-letter code: DNA-directed RNA polymerase subunit alpha (323 aa).

The interval 1–225 is alpha N-terminal domain (alpha-NTD); sequence MLDIAMPKIE…QYSQTIADFN (225 aa). The interval 243–323 is alpha C-terminal domain (alpha-CTD); it reads PADIYDTPIE…TNSSPAGIES (81 aa).

Belongs to the RNA polymerase alpha chain family. As to quaternary structure, homodimer. The RNAP catalytic core consists of 2 alpha, 1 beta, 1 beta' and 1 omega subunit. When a sigma factor is associated with the core the holoenzyme is formed, which can initiate transcription.

The enzyme catalyses RNA(n) + a ribonucleoside 5'-triphosphate = RNA(n+1) + diphosphate. Functionally, DNA-dependent RNA polymerase catalyzes the transcription of DNA into RNA using the four ribonucleoside triphosphates as substrates. In Roseiflexus castenholzii (strain DSM 13941 / HLO8), this protein is DNA-directed RNA polymerase subunit alpha.